The sequence spans 261 residues: Probable septum site-determining protein MinC (261 aa).

Belongs to the MinC family. In terms of assembly, interacts with MinD and FtsZ.

Functionally, cell division inhibitor that blocks the formation of polar Z ring septums. Rapidly oscillates between the poles of the cell to destabilize FtsZ filaments that have formed before they mature into polar Z rings. Prevents FtsZ polymerization. This is Probable septum site-determining protein MinC from Burkholderia cenocepacia (strain ATCC BAA-245 / DSM 16553 / LMG 16656 / NCTC 13227 / J2315 / CF5610) (Burkholderia cepacia (strain J2315)).